Reading from the N-terminus, the 293-residue chain is MALEMRLPKARKPLSESLGRDSKKHLVVPGDTITTDTGFMRGHGTYMGEEKLIASVAGSVERVNKLICVKALKTRYNGEVGDIVVGRITEVQQKRWKVETNSRLDSVLLLSSMNLPGGELRRRSAEDELAMRGFLQEGDLISAEVQAVFSDGAVSLHTRSLKYGKLGQGVLVQVSPSLVKRQKTHFHDLPCGASVILGNNGFIWIYPTPEHKDEDAGGFIANLEPVALSDREVISRLRNCVVLLVTQRMMLFDTSILYCYEASLAHQIKDILKPEVMEEIMLETRQRLLDQEG.

The tract at residues 1 to 20 (MALEMRLPKARKPLSESLGR) is disordered. Residues 79–159 (EVGDIVVGRI…SDGAVSLHTR (81 aa)) enclose the S1 motif domain. Phosphoserine is present on Ser-124.

It belongs to the RRP4 family. As to quaternary structure, component of the RNA exosome core complex (Exo-9), composed of EXOSC1, EXOSC2, EXOSC3, EXOSC4, EXOSC5, EXOSC6, EXOSC7, EXOSC8 and EXOSC9; within the complex interacts with EXOSC4 and EXOSC7. The catalytically inactive RNA exosome core complex (Exo-9) associates with the catalytic subunit EXOSC10/RRP6. Exo-9 may associate with DIS3 to form the nucleolar exosome complex, or DIS3L to form the cytoplasmic exosome complex. Exo-9 is formed by a hexameric base ring consisting of the heterodimers EXOSC4-EXOSC9, EXOSC5-EXOSC8 and EXOSC6-EXOSC7, and a cap ring consisting of EXOSC1, EXOSC2 and EXOSC3. The RNA exosome complex associates with cofactors C1D/RRP47, MPHOSPH6/MPP6 and MTREX/MTR4. Interacts with GTPBP1. Interacts with ZFP36L1 (via N-terminus).

Its subcellular location is the cytoplasm. It is found in the nucleus. The protein resides in the nucleolus. In terms of biological role, non-catalytic component of the RNA exosome complex which has 3'-&gt;5' exoribonuclease activity and participates in a multitude of cellular RNA processing and degradation events. In the nucleus, the RNA exosome complex is involved in proper maturation of stable RNA species such as rRNA, snRNA and snoRNA, in the elimination of RNA processing by-products and non-coding 'pervasive' transcripts, such as antisense RNA species and promoter-upstream transcripts (PROMPTs), and of mRNAs with processing defects, thereby limiting or excluding their export to the cytoplasm. The RNA exosome may be involved in Ig class switch recombination (CSR) and/or Ig variable region somatic hypermutation (SHM) by targeting AICDA deamination activity to transcribed dsDNA substrates. In the cytoplasm, the RNA exosome complex is involved in general mRNA turnover and specifically degrades inherently unstable mRNAs containing AU-rich elements (AREs) within their 3' untranslated regions, and in RNA surveillance pathways, preventing translation of aberrant mRNAs. It seems to be involved in degradation of histone mRNA. The catalytic inactive RNA exosome core complex of 9 subunits (Exo-9) is proposed to play a pivotal role in the binding and presentation of RNA for ribonucleolysis, and to serve as a scaffold for the association with catalytic subunits and accessory proteins or complexes. EXOSC2 as peripheral part of the Exo-9 complex stabilizes the hexameric ring of RNase PH-domain subunits through contacts with EXOSC4 and EXOSC7. The protein is Exosome complex component RRP4 (Exosc2) of Mus musculus (Mouse).